A 631-amino-acid chain; its full sequence is Phosphomethylpyrimidine synthase (631 aa).

Residues Asn239, Met268, Tyr297, His333, 353–355, 394–397, and Glu433 contribute to the substrate site; these read SRG and DGLR. A Zn(2+)-binding site is contributed by His437. Tyr460 serves as a coordination point for substrate. His501 lines the Zn(2+) pocket. 3 residues coordinate [4Fe-4S] cluster: Cys581, Cys584, and Cys589.

This sequence belongs to the ThiC family. As to quaternary structure, homodimer. It depends on [4Fe-4S] cluster as a cofactor.

The enzyme catalyses 5-amino-1-(5-phospho-beta-D-ribosyl)imidazole + S-adenosyl-L-methionine = 4-amino-2-methyl-5-(phosphooxymethyl)pyrimidine + CO + 5'-deoxyadenosine + formate + L-methionine + 3 H(+). The protein operates within cofactor biosynthesis; thiamine diphosphate biosynthesis. Catalyzes the synthesis of the hydroxymethylpyrimidine phosphate (HMP-P) moiety of thiamine from aminoimidazole ribotide (AIR) in a radical S-adenosyl-L-methionine (SAM)-dependent reaction. In Salmonella schwarzengrund (strain CVM19633), this protein is Phosphomethylpyrimidine synthase.